Here is a 330-residue protein sequence, read N- to C-terminus: Protein TIFY 11f (330 aa).

Residues 61–97 (EAAAAAQLKIMYGGRMLVFDDFFPAGGAVVELVRAAA) form the Tify 1 domain. The short motif at 124 to 142 (PVVRKVSLQRFVEKRRRMR) is the Jas element. A Nuclear localization signal motif is present at residues 126–133 (VRKVSLQR). Residues 228-264 (EAAAAAQLKIMYGGRMLVFDDFFPAGGAVVELVRAAA) form the Tify 2 domain. Residues 267–330 (GRDDDGARAR…SGRTDDAAFY (64 aa)) form a disordered region.

It belongs to the TIFY/JAZ family. Ubiquitinated. Targeted for degradation by the SCF(COI1) E3 ubiquitin ligase-proteasome pathway during jasmonate signaling.

The protein localises to the nucleus. Repressor of jasmonate responses. This chain is Protein TIFY 11f, found in Oryza sativa subsp. japonica (Rice).